The primary structure comprises 220 residues: Uracil-DNA glycosylase 2 (220 aa).

The Proton acceptor role is filled by Asp65.

Belongs to the uracil-DNA glycosylase (UDG) superfamily. UNG family.

It is found in the cytoplasm. It catalyses the reaction Hydrolyzes single-stranded DNA or mismatched double-stranded DNA and polynucleotides, releasing free uracil.. Functionally, excises uracil residues from the DNA which can arise as a result of misincorporation of dUMP residues by DNA polymerase or due to deamination of cytosine. The polypeptide is Uracil-DNA glycosylase 2 (Bacteroides fragilis (strain ATCC 25285 / DSM 2151 / CCUG 4856 / JCM 11019 / LMG 10263 / NCTC 9343 / Onslow / VPI 2553 / EN-2)).